A 241-amino-acid polypeptide reads, in one-letter code: Interleukin-6 (241 aa).

Residues 1 to 25 are disordered; it reads MNFTEGCEATGRRPGSAGSRRRRAP. An N-terminal signal peptide occupies residues 1–46; the sequence is MNFTEGCEATGRRPGSAGSRRRRAPRPGPVALLPLLLPLLLPPAAA. Cysteines 122 and 132 form a disulfide.

The protein belongs to the IL-6 superfamily. As to quaternary structure, component of a hexamer of two molecules each of IL6, IL6R and IL6ST; first binds to IL6R to associate with the signaling subunit IL6ST.

The protein localises to the secreted. Cytokine with a wide variety of biological functions in immunity, tissue regeneration, and metabolism. Binds to IL6R, then the complex associates to the signaling subunit IL6ST/gp130 to trigger the intracellular IL6-signaling pathway. The interaction with the membrane-bound IL6R and IL6ST stimulates 'classic signaling', whereas the binding of IL6 and soluble IL6R to IL6ST stimulates 'trans-signaling'. Alternatively, 'cluster signaling' occurs when membrane-bound IL6:IL6R complexes on transmitter cells activate IL6ST receptors on neighboring receiver cells. The polypeptide is Interleukin-6 (IL6) (Gallus gallus (Chicken)).